The chain runs to 491 residues: Acetylcholine receptor subunit epsilon (491 aa).

The N-terminal stretch at 1-20 (MAGALLCALLLLQLLGRGEG) is a signal peptide. Residues 21–239 (KNEELRLYHY…VIYSLIIRRK (219 aa)) lie on the Extracellular side of the membrane. N-linked (GlcNAc...) asparagine glycosylation is found at asparagine 86 and asparagine 161. A disulfide bridge links cysteine 148 with cysteine 162. A helical transmembrane segment spans residues 240-264 (PLFYVINIIVPCVLISGLVLLAYFL). Over 265–272 (PAQAGGQK) the chain is Cytoplasmic. A helical membrane pass occupies residues 273 to 291 (CTVSINVLLAQTVFLFLIA). The Extracellular segment spans residues 292 to 306 (QKTPETSLSVPLLGR). The helical transmembrane segment at 307–328 (YLIFVMVVATLIVMNCVIVLNV) threads the bilayer. The Cytoplasmic segment spans residues 329 to 456 (SLRTPTTHAM…WVRMGKALDS (128 aa)). The helical transmembrane segment at 457 to 480 (ICFWAALVLFLVGSSLIFLGAYFN) threads the bilayer. Topologically, residues 481–491 (RVPQLPYPPCM) are extracellular.

The protein belongs to the ligand-gated ion channel (TC 1.A.9) family. Acetylcholine receptor (TC 1.A.9.1) subfamily. Epsilon/CHRNE sub-subfamily.

It is found in the postsynaptic cell membrane. The protein resides in the cell membrane. It catalyses the reaction K(+)(in) = K(+)(out). The catalysed reaction is Na(+)(in) = Na(+)(out). Functionally, after binding acetylcholine, the AChR responds by an extensive change in conformation that affects all subunits and leads to opening of an ion-conducting channel across the plasma membrane. The protein is Acetylcholine receptor subunit epsilon (CHRNE) of Bos taurus (Bovine).